Reading from the N-terminus, the 81-residue chain is N.vectensis toxin 4 (81 aa).

An N-terminal signal peptide occupies residues 1–20; the sequence is MRSSWMFVICFAMLILYTNG. 3 cysteine pairs are disulfide-bonded: C46–C75, C48–C70, and C63–C76.

In terms of tissue distribution, expressed in ectodermal gland cells. In adult female tissues, highly transcribed in mesenteries (gametes-producing tissue) and slightly transcribed in tentacles, pharynx and physa.

Has toxic effects on zebrafish larvae. It causes contractile paralysis and twitching of the tail within 30 minutes, followed by death within 40 minutes. Does not show any toxicity when injected into arthropods (cherry shrimps or grass shrimps). This is N.vectensis toxin 4 from Nematostella vectensis (Starlet sea anemone).